We begin with the raw amino-acid sequence, 100 residues long: Aspartyl/glutamyl-tRNA(Asn/Gln) amidotransferase subunit C (100 aa).

It belongs to the GatC family. In terms of assembly, heterotrimer of A, B and C subunits.

The catalysed reaction is L-glutamyl-tRNA(Gln) + L-glutamine + ATP + H2O = L-glutaminyl-tRNA(Gln) + L-glutamate + ADP + phosphate + H(+). It carries out the reaction L-aspartyl-tRNA(Asn) + L-glutamine + ATP + H2O = L-asparaginyl-tRNA(Asn) + L-glutamate + ADP + phosphate + 2 H(+). Its function is as follows. Allows the formation of correctly charged Asn-tRNA(Asn) or Gln-tRNA(Gln) through the transamidation of misacylated Asp-tRNA(Asn) or Glu-tRNA(Gln) in organisms which lack either or both of asparaginyl-tRNA or glutaminyl-tRNA synthetases. The reaction takes place in the presence of glutamine and ATP through an activated phospho-Asp-tRNA(Asn) or phospho-Glu-tRNA(Gln). This is Aspartyl/glutamyl-tRNA(Asn/Gln) amidotransferase subunit C from Streptococcus uberis (strain ATCC BAA-854 / 0140J).